Here is a 965-residue protein sequence, read N- to C-terminus: Phosphatidylethanolamine N-methyltransferase (965 aa).

Over 1-82 (MDRGLSTGTN…SPSEPKNLSD (82 aa)) the chain is Lumenal. The segment at 34–54 (PTVTNASNGKDKAGKTFGRTP) is disordered. The chain crosses the membrane as a helical span at residues 83 to 103 (LVVLTILAGHIFLLWILPSGA). Residues 104–106 (KIP) are Cytoplasmic-facing. A helical transmembrane segment spans residues 107–127 (VFAVIYLFWRSCYNAGIGWLL). The Lumenal segment spans residues 128 to 192 (HNQSHHKTLV…EYNTWLVFRR (65 aa)). Residues 193-213 (LVDLILMCDFASYCLFAIACS) form a helical membrane-spanning segment. The Cytoplasmic portion of the chain corresponds to 214-220 (RHPANES). A helical transmembrane segment spans residues 221 to 241 (VLMTVIRWTSGIALVLFNLWV). Residues 242–274 (KLDAHRVVKDYAWYWGDFFYLIDQELTFDGVFE) lie on the Lumenal side of the membrane. A helical membrane pass occupies residues 275 to 295 (MAPHPMYSVGYAGYYGISLMA). Topologically, residues 296-297 (AS) are cytoplasmic. The chain crosses the membrane as a helical span at residues 298 to 318 (YKVLFISIIAHAAQFAFLVLV). The Lumenal portion of the chain corresponds to 319 to 394 (ENPHIDKTYN…LDLHRITDTS (76 aa)). A disordered region spans residues 326-368 (TYNPPPPRKRTITEHDAASQRSQSPDTPNAPSVSEENVPNATT). Polar residues predominate over residues 344–368 (SQRSQSPDTPNAPSVSEENVPNATT). Residues 395–415 (SILVQFLMFSLTVLTPSTPWY) traverse the membrane as a helical segment. Residue Gln-416 is a topological domain, cytoplasmic. Residues 417-437 (FLFVANAAIWRLWYSVGIGYL) form a helical membrane-spanning segment. Topologically, residues 438–470 (LNRQSNCKSWTRHFVKYGETPHEAWNQWKGTYH) are lumenal. A helical transmembrane segment spans residues 471-491 (LSMVMCYASFISAVWKMYTLP). The Cytoplasmic portion of the chain corresponds to 492-503 (SNWGYGLAILRH). A helical transmembrane segment spans residues 504–524 (VLGAGLISLQIWTSVSIYESL). Residues 525-559 (GEFGWFYGDFFFDESPKLTYNGIYRFLNNPERVLG) are Lumenal-facing. The helical transmembrane segment at 560–580 (LAGVWGAVLITASGTVAFLAF) threads the bilayer. At 581–965 (LSHILSLGFI…GATTPTESKE (385 aa)) the chain is on the cytoplasmic side.

This sequence belongs to the class VI-like SAM-binding methyltransferase superfamily. CHO2 family.

The protein resides in the endoplasmic reticulum membrane. It carries out the reaction a 1,2-diacyl-sn-glycero-3-phosphoethanolamine + S-adenosyl-L-methionine = a 1,2-diacyl-sn-glycero-3-phospho-N-methylethanolamine + S-adenosyl-L-homocysteine + H(+). It functions in the pathway phospholipid metabolism; phosphatidylcholine biosynthesis. Its function is as follows. Catalyzes the first step of the methylation pathway of phosphatidylcholine biosynthesis, the SAM-dependent methylation of phosphatidylethanolamine (PE) to phosphatidylmonomethylethanolamine (PMME). In Emericella nidulans (strain FGSC A4 / ATCC 38163 / CBS 112.46 / NRRL 194 / M139) (Aspergillus nidulans), this protein is Phosphatidylethanolamine N-methyltransferase.